The sequence spans 213 residues: ATP-dependent dethiobiotin synthetase BioD (213 aa).

13-18 (GIGKTV) is a binding site for ATP. A Mg(2+)-binding site is contributed by Thr17. The active site involves Lys33. Residue Glu100 participates in Mg(2+) binding. Residues 100-103 (EGAG) and 184-186 (PRL) each bind ATP.

It belongs to the dethiobiotin synthetase family. As to quaternary structure, homodimer. Requires Mg(2+) as cofactor.

The protein resides in the cytoplasm. It catalyses the reaction (7R,8S)-7,8-diammoniononanoate + CO2 + ATP = (4R,5S)-dethiobiotin + ADP + phosphate + 3 H(+). Its pathway is cofactor biosynthesis; biotin biosynthesis; biotin from 7,8-diaminononanoate: step 1/2. Functionally, catalyzes a mechanistically unusual reaction, the ATP-dependent insertion of CO2 between the N7 and N8 nitrogen atoms of 7,8-diaminopelargonic acid (DAPA, also called 7,8-diammoniononanoate) to form a ureido ring. This chain is ATP-dependent dethiobiotin synthetase BioD, found in Rhodopseudomonas palustris (strain HaA2).